A 143-amino-acid polypeptide reads, in one-letter code: Anti-sigma F factor (143 aa).

It belongs to the anti-sigma-factor family.

It carries out the reaction L-seryl-[protein] + ATP = O-phospho-L-seryl-[protein] + ADP + H(+). The enzyme catalyses L-threonyl-[protein] + ATP = O-phospho-L-threonyl-[protein] + ADP + H(+). Binds to sigma F and blocks its ability to form an RNA polymerase holoenzyme (E-sigma F). Phosphorylates SpoIIAA on a serine residue. This phosphorylation may enable SpoIIAA to act as an anti-anti-sigma factor that counteracts SpoIIAB and thus releases sigma F from inhibition. This Clostridium beijerinckii (strain ATCC 51743 / NCIMB 8052) (Clostridium acetobutylicum) protein is Anti-sigma F factor.